The chain runs to 428 residues: Putative zinc metalloprotease SAS1196 (428 aa).

A Zn(2+)-binding site is contributed by His21. Glu22 is an active-site residue. His25 contacts Zn(2+). The next 4 membrane-spanning stretches (helical) occupy residues 172-194, 309-331, 352-374, and 401-420; these read FLTLFAGPLFNFILALVLFIGLA, GSTLIFTAVVGMLASIFTGGFSF, IISLIGYTALLSVNLGIMNLIPI, and TTIIAIGAIFMVVIMILVTW. Residues 186–269 form the PDZ domain; the sequence is ALVLFIGLAY…TKSVELTPKK (84 aa).

It belongs to the peptidase M50B family. It depends on Zn(2+) as a cofactor.

Its subcellular location is the cell membrane. This is Putative zinc metalloprotease SAS1196 from Staphylococcus aureus (strain MSSA476).